The chain runs to 564 residues: Proline--tRNA ligase (564 aa).

This sequence belongs to the class-II aminoacyl-tRNA synthetase family. ProS type 1 subfamily. As to quaternary structure, homodimer.

It is found in the cytoplasm. The catalysed reaction is tRNA(Pro) + L-proline + ATP = L-prolyl-tRNA(Pro) + AMP + diphosphate. Catalyzes the attachment of proline to tRNA(Pro) in a two-step reaction: proline is first activated by ATP to form Pro-AMP and then transferred to the acceptor end of tRNA(Pro). As ProRS can inadvertently accommodate and process non-cognate amino acids such as alanine and cysteine, to avoid such errors it has two additional distinct editing activities against alanine. One activity is designated as 'pretransfer' editing and involves the tRNA(Pro)-independent hydrolysis of activated Ala-AMP. The other activity is designated 'posttransfer' editing and involves deacylation of mischarged Ala-tRNA(Pro). The misacylated Cys-tRNA(Pro) is not edited by ProRS. In Sulfurihydrogenibium sp. (strain YO3AOP1), this protein is Proline--tRNA ligase.